Reading from the N-terminus, the 194-residue chain is RNA polymerase II subunit A C-terminal domain phosphatase SSU72 like protein 5 (194 aa).

Belongs to the SSU72 phosphatase family.

It localises to the nucleus. The catalysed reaction is O-phospho-L-seryl-[protein] + H2O = L-seryl-[protein] + phosphate. It carries out the reaction O-phospho-L-threonyl-[protein] + H2O = L-threonyl-[protein] + phosphate. Protein phosphatase that catalyzes the dephosphorylation of the C-terminal domain of RNA polymerase II. Plays a role in RNA processing and termination. The protein is RNA polymerase II subunit A C-terminal domain phosphatase SSU72 like protein 5 of Homo sapiens (Human).